The chain runs to 432 residues: Adenylosuccinate synthetase (432 aa).

Residues 13–19 and 41–43 each bind GTP; these read GDEGKGK and GHT. The Proton acceptor role is filled by D14. Residues D14 and G41 each contribute to the Mg(2+) site. Residues 14–17, 39–42, T130, R144, Q225, T240, and R304 each bind IMP; these read DEGK and NAGH. H42 serves as the catalytic Proton donor. 300 to 306 contacts substrate; it reads ATTGRRR. GTP contacts are provided by residues R306, 332 to 334, and 415 to 417; these read KLD and STG.

This sequence belongs to the adenylosuccinate synthetase family. In terms of assembly, homodimer. It depends on Mg(2+) as a cofactor.

It localises to the cytoplasm. The enzyme catalyses IMP + L-aspartate + GTP = N(6)-(1,2-dicarboxyethyl)-AMP + GDP + phosphate + 2 H(+). The protein operates within purine metabolism; AMP biosynthesis via de novo pathway; AMP from IMP: step 1/2. In terms of biological role, plays an important role in the de novo pathway of purine nucleotide biosynthesis. Catalyzes the first committed step in the biosynthesis of AMP from IMP. In Baumannia cicadellinicola subsp. Homalodisca coagulata, this protein is Adenylosuccinate synthetase.